A 205-amino-acid polypeptide reads, in one-letter code: LexA repressor (205 aa).

The H-T-H motif DNA-binding region spans 28 to 48 (RAEIAKRLGFKSANAAEEHLK). Residues serine 122 and lysine 159 each act as for autocatalytic cleavage activity in the active site.

Belongs to the peptidase S24 family. In terms of assembly, homodimer.

It catalyses the reaction Hydrolysis of Ala-|-Gly bond in repressor LexA.. Functionally, represses a number of genes involved in the response to DNA damage (SOS response), including recA and lexA. In the presence of single-stranded DNA, RecA interacts with LexA causing an autocatalytic cleavage which disrupts the DNA-binding part of LexA, leading to derepression of the SOS regulon and eventually DNA repair. This Shewanella woodyi (strain ATCC 51908 / MS32) protein is LexA repressor.